A 485-amino-acid chain; its full sequence is Glutamate mutase epsilon subunit (485 aa).

Arg-66 contacts L-glutamate. Gly-68 contacts adenosylcob(III)alamin. Residue Arg-100 coordinates L-glutamate. Asn-123 contributes to the adenosylcob(III)alamin binding site. L-glutamate is bound by residues Arg-149 to His-150, Glu-171, and Tyr-177. Pro-180 provides a ligand contact to adenosylcob(III)alamin. Residue Tyr-181 participates in L-glutamate binding. Residues Phe-297, Lys-326, Glu-330, and Ile-334 each coordinate adenosylcob(III)alamin.

It belongs to the methylaspartate mutase GlmE subunit family. As to quaternary structure, heterotetramer composed of 2 epsilon subunits (GlmE) and 2 sigma subunits (GlmS). GlmE exists as a homodimer and GlmS as a monomer. It depends on adenosylcob(III)alamin as a cofactor.

It carries out the reaction (2S,3S)-3-methyl-L-aspartate = L-glutamate. Its pathway is amino-acid degradation; L-glutamate degradation via mesaconate pathway; acetate and pyruvate from L-glutamate: step 1/4. In terms of biological role, catalyzes the carbon skeleton rearrangement of L-glutamate to L-threo-3-methylaspartate ((2S,3S)-3-methylaspartate). The protein is Glutamate mutase epsilon subunit of Treponema denticola (strain ATCC 35405 / DSM 14222 / CIP 103919 / JCM 8153 / KCTC 15104).